Reading from the N-terminus, the 558-residue chain is Coiled-coil domain-containing protein 63 (558 aa).

A disordered region spans residues 1–26; that stretch reads MPTKKHRRKDPESPQEPSEKTKEQLV. Over residues 9–26 the composition is skewed to basic and acidic residues; sequence KDPESPQEPSEKTKEQLV. Coiled coils occupy residues 48–289 and 339–416; these read NFRS…KAKK and VTEL…VENL. The segment at 531 to 558 is disordered; the sequence is HYATRESRNRDSMPEKGDELKSKKKVTV. Over residues 533-551 the composition is skewed to basic and acidic residues; the sequence is ATRESRNRDSMPEKGDELK.

In terms of biological role, plays a role in spermiogenesis. Involved in the elongation of flagella and the formation of sperm heads. The polypeptide is Coiled-coil domain-containing protein 63 (Bos taurus (Bovine)).